We begin with the raw amino-acid sequence, 42 residues long: Statherin (42 aa).

The interval 1–6 (DSSEEK) is hydroxyapatite-binding; inhibits crystal growth. Phosphoserine is present on residues serine 2 and serine 3. A disordered region spans residues 18–42 (RYGPYQPFVPPPLYPQPYQPYQPQY). A hydrophobic; inhibits precipitation of calcium phosphate salts region spans residues 18 to 42 (RYGPYQPFVPPPLYPQPYQPYQPQY). Positions 24–42 (PFVPPPLYPQPYQPYQPQY) are enriched in pro residues.

It belongs to the histatin/statherin family. Secreted by parotid and submandibular glands.

Its subcellular location is the secreted. In terms of biological role, salivary protein that stabilizes saliva supersaturated with calcium salts by inhibiting the precipitation of calcium phosphate salts. It also modulates hydroxyapatite crystal formation on the tooth surface. The chain is Statherin (STATH) from Macaca arctoides (Stump-tailed macaque).